The primary structure comprises 751 residues: Photosystem I P700 chlorophyll a apoprotein A1 (751 aa).

8 helical membrane passes run 73-96, 159-182, 198-222, 294-312, 349-372, 388-414, 436-458, and 533-551; these read VFSAHFGQLGVIFIWLSGMYFHGA, LYSTAIGALICAGLMFFAGWWHYH, MNHHLAGLLGLGSLAWAGHQIHIAL, MAHHHLAIAVLFLVAGHQY, WHAQLAINLALMGSLSIIVSHHMY, LSLFTHHMWIGGFCICGAAAHAAIFMV, AIISHLNWVCIFLGFHSFGLYIH, and FMVHHIHAFTIHVTVLILL. [4Fe-4S] cluster is bound by residues C575 and C584. Transmembrane regions (helical) follow at residues 591-612 and 665-687; these read HVFLGLFWMYNSISIVIFHFSW and LSAYGLIFLGAHFIWAFSLMFLF. H676 contacts chlorophyll a'. M684 and Y692 together coordinate chlorophyll a. W693 is a binding site for phylloquinone. Residues 725–745 form a helical membrane-spanning segment; that stretch reads AVGVAHYLLGGIATTWSFFLA.

This sequence belongs to the PsaA/PsaB family. As to quaternary structure, the PsaA/B heterodimer binds the P700 chlorophyll special pair and subsequent electron acceptors. PSI consists of a core antenna complex that captures photons, and an electron transfer chain that converts photonic excitation into a charge separation. The eukaryotic PSI reaction center is composed of at least 11 subunits. P700 is a chlorophyll a/chlorophyll a' dimer, A0 is one or more chlorophyll a, A1 is one or both phylloquinones and FX is a shared 4Fe-4S iron-sulfur center. serves as cofactor.

The protein resides in the plastid. The protein localises to the chloroplast thylakoid membrane. It catalyses the reaction reduced [plastocyanin] + hnu + oxidized [2Fe-2S]-[ferredoxin] = oxidized [plastocyanin] + reduced [2Fe-2S]-[ferredoxin]. Functionally, psaA and PsaB bind P700, the primary electron donor of photosystem I (PSI), as well as the electron acceptors A0, A1 and FX. PSI is a plastocyanin/cytochrome c6-ferredoxin oxidoreductase, converting photonic excitation into a charge separation, which transfers an electron from the donor P700 chlorophyll pair to the spectroscopically characterized acceptors A0, A1, FX, FA and FB in turn. Oxidized P700 is reduced on the lumenal side of the thylakoid membrane by plastocyanin or cytochrome c6. In Ostreococcus tauri, this protein is Photosystem I P700 chlorophyll a apoprotein A1.